We begin with the raw amino-acid sequence, 176 residues long: Prenylated Rab acceptor 1 (176 aa).

Methionine 1 carries the post-translational modification N-acetylmethionine. The short motif at 11–13 (SRF) is the SKL peroxisome targeting motif element. The residue at position 18 (serine 18) is a Phosphoserine. 2 consecutive transmembrane segments (helical) span residues 84 to 104 (LLTN…IVGI) and 129 to 149 (VCVA…LWLI).

Belongs to the PRA1 family. In terms of assembly, interacts with YIP1 and the Rab GTPases SEC4, YPT1, YPT6, YPT10, YPT11, YPT31, YPT32 and YPT52.

It is found in the golgi apparatus membrane. The protein localises to the peroxisome membrane. The polypeptide is Prenylated Rab acceptor 1 (YIP3) (Saccharomyces cerevisiae (strain ATCC 204508 / S288c) (Baker's yeast)).